A 257-amino-acid polypeptide reads, in one-letter code: Trans-aconitate 2-methyltransferase (257 aa).

This sequence belongs to the methyltransferase superfamily. Tam family.

Its subcellular location is the cytoplasm. The catalysed reaction is trans-aconitate + S-adenosyl-L-methionine = (E)-3-(methoxycarbonyl)pent-2-enedioate + S-adenosyl-L-homocysteine. In terms of biological role, catalyzes the S-adenosylmethionine monomethyl esterification of trans-aconitate. The protein is Trans-aconitate 2-methyltransferase of Sinorhizobium fredii (strain NBRC 101917 / NGR234).